A 513-amino-acid polypeptide reads, in one-letter code: Maturase K (513 aa).

It belongs to the intron maturase 2 family. MatK subfamily.

Its subcellular location is the plastid. The protein resides in the chloroplast. Usually encoded in the trnK tRNA gene intron. Probably assists in splicing its own and other chloroplast group II introns. This chain is Maturase K, found in Sporobolus michauxianus (Prairie cordgrass).